A 259-amino-acid polypeptide reads, in one-letter code: NAD kinase (259 aa).

Aspartate 43 serves as the catalytic Proton acceptor. NAD(+) is bound by residues 43–44, 111–112, and arginine 136; these read DG and NE.

This sequence belongs to the NAD kinase family. The cofactor is a divalent metal cation.

The protein resides in the cytoplasm. It catalyses the reaction NAD(+) + ATP = ADP + NADP(+) + H(+). In terms of biological role, involved in the regulation of the intracellular balance of NAD and NADP, and is a key enzyme in the biosynthesis of NADP. Catalyzes specifically the phosphorylation on 2'-hydroxyl of the adenosine moiety of NAD to yield NADP. In Mycoplasma pneumoniae (strain ATCC 29342 / M129 / Subtype 1) (Mycoplasmoides pneumoniae), this protein is NAD kinase.